A 513-amino-acid chain; its full sequence is Cobyric acid synthase (513 aa).

A GATase cobBQ-type domain is found at 270–470 (RLRIAIVAYP…THGLFESPAV (201 aa)). Cys351 functions as the Nucleophile in the catalytic mechanism. The active site involves His462.

This sequence belongs to the CobB/CobQ family. CobQ subfamily.

The protein operates within cofactor biosynthesis; adenosylcobalamin biosynthesis. In terms of biological role, catalyzes amidations at positions B, D, E, and G on adenosylcobyrinic A,C-diamide. NH(2) groups are provided by glutamine, and one molecule of ATP is hydrogenolyzed for each amidation. In Leptothrix cholodnii (strain ATCC 51168 / LMG 8142 / SP-6) (Leptothrix discophora (strain SP-6)), this protein is Cobyric acid synthase.